A 38-amino-acid polypeptide reads, in one-letter code: Photosystem II reaction center protein M (38 aa).

The chain crosses the membrane as a helical span at residues 5 to 25; sequence ILGLIATALFIVIPTSFLLIL.

The protein belongs to the PsbM family. PSII is composed of 1 copy each of membrane proteins PsbA, PsbB, PsbC, PsbD, PsbE, PsbF, PsbH, PsbI, PsbJ, PsbK, PsbL, PsbM, PsbT, PsbX, PsbY, PsbZ, Psb30/Ycf12, at least 3 peripheral proteins of the oxygen-evolving complex and a large number of cofactors. It forms dimeric complexes.

Its subcellular location is the plastid. The protein resides in the cyanelle thylakoid membrane. Functionally, one of the components of the core complex of photosystem II (PSII). PSII is a light-driven water:plastoquinone oxidoreductase that uses light energy to abstract electrons from H(2)O, generating O(2) and a proton gradient subsequently used for ATP formation. It consists of a core antenna complex that captures photons, and an electron transfer chain that converts photonic excitation into a charge separation. This subunit is found at the monomer-monomer interface. The sequence is that of Photosystem II reaction center protein M from Cyanophora paradoxa.